Consider the following 67-residue polypeptide: LPS-assembly lipoprotein LptM (67 aa).

The first 19 residues, 1–19, serve as a signal peptide directing secretion; sequence MKNVFKTLAVLLTLFSLTG. C20 carries the N-palmitoyl cysteine lipid modification. A lipid anchor (S-diacylglycerol cysteine) is attached at C20. Positions 26-67 are disordered; it reads LYFPPADKNAPPPTKKVDSQTQSTMPDKNDRATGDGPSQVNY.

This sequence belongs to the LptM family. As to quaternary structure, interacts with the outer membrane embedded portion of the LPS translocon formed by LptD and LptE (LptDE).

It is found in the cell outer membrane. Functionally, component of the lipopolysaccharide (LPS) transport (Lpt) pathway that promotes efficient assembly of the outer membrane LPS translocon (LptDE) by the BAM complex. Facilitates oxidative maturation of LptD by stabilizing a conformation of the LPS translocon in which LptD can efficiently acquire native disulfide bonds, thereby activating the LPS translocon. The polypeptide is LPS-assembly lipoprotein LptM (Salmonella typhi).